We begin with the raw amino-acid sequence, 314 residues long: tRNA dimethylallyltransferase (314 aa).

12–19 serves as a coordination point for ATP; that stretch reads GPTAGGKS. 14–19 contacts substrate; sequence TAGGKS. Residues 37–40 are interaction with substrate tRNA; it reads DSMQ.

Belongs to the IPP transferase family. In terms of assembly, monomer. The cofactor is Mg(2+).

The enzyme catalyses adenosine(37) in tRNA + dimethylallyl diphosphate = N(6)-dimethylallyladenosine(37) in tRNA + diphosphate. Its function is as follows. Catalyzes the transfer of a dimethylallyl group onto the adenine at position 37 in tRNAs that read codons beginning with uridine, leading to the formation of N6-(dimethylallyl)adenosine (i(6)A). In Rhodospirillum centenum (strain ATCC 51521 / SW), this protein is tRNA dimethylallyltransferase.